Here is a 130-residue protein sequence, read N- to C-terminus: Small ribosomal subunit protein uS9 (130 aa).

It belongs to the universal ribosomal protein uS9 family.

This is Small ribosomal subunit protein uS9 from Shewanella sediminis (strain HAW-EB3).